The following is a 76-amino-acid chain: Omega/kappa-hexatoxin-Ar1g (76 aa).

Residues M1–A22 form the signal peptide. The propeptide occupies G23–V35. 3 disulfides stabilise this stretch: C40–C55, C47–C60, and C54–C74.

It belongs to the neurotoxin 08 (Shiva) family. 02 (omega/kappa toxin) subfamily. In terms of tissue distribution, expressed by the venom gland.

Its subcellular location is the secreted. Toxin that may inhibit ion channels. In Atrax robustus (Sydney funnel-web spider), this protein is Omega/kappa-hexatoxin-Ar1g.